Consider the following 871-residue polypeptide: DNA mismatch repair protein MutS (871 aa).

ATP is bound at residue 617-624; the sequence is GPNMGGKS.

Belongs to the DNA mismatch repair MutS family.

In terms of biological role, this protein is involved in the repair of mismatches in DNA. It is possible that it carries out the mismatch recognition step. This protein has a weak ATPase activity. The sequence is that of DNA mismatch repair protein MutS from Hydrogenovibrio crunogenus (strain DSM 25203 / XCL-2) (Thiomicrospira crunogena).